Reading from the N-terminus, the 101-residue chain is Osteocalcin (101 aa).

An N-terminal signal peptide occupies residues 1 to 19 (MKLAILTVLLLGAAVLCLG). The propeptide occupies 20–52 (SKDADHSNSVGESHSSEAFISRQESASFARLKR). A Gla domain is found at 53–99 (SYGNNVGQGAAVGSPLESQREVCELNPDCDELADHIGFQEAYRRFYG). The Ca(2+) site is built by Glu69, Glu73, Glu76, and Asp82. A 4-carboxyglutamate mark is found at Glu69, Glu73, and Glu76. An intrachain disulfide couples Cys75 to Cys81.

This sequence belongs to the osteocalcin/matrix Gla protein family. Post-translationally, gamma-carboxyglutamate residues are formed by vitamin K dependent carboxylation by GGCX. These residues are essential for the binding of calcium.

It localises to the secreted. In terms of biological role, the carboxylated form is one of the main organic components of the bone matrix, which constitutes 1-2% of the total bone protein. The carboxylated form binds strongly to apatite and calcium. In Xenopus laevis (African clawed frog), this protein is Osteocalcin (bglap).